The sequence spans 1150 residues: uncharacterized protein (1150 aa).

The protein belongs to the TMEM1 family.

This is an uncharacterized protein from Schizosaccharomyces pombe (strain 972 / ATCC 24843) (Fission yeast).